A 548-amino-acid chain; its full sequence is Guanine nucleotide-binding protein-like 3 (548 aa).

Positions 1 to 45 are enriched in basic residues; the sequence is MKRPKLKKGSKRLSCHKRYKIQKKVREHNRKARKEAKKSGTRKQK. A disordered region spans residues 1–118; it reads MKRPKLKKGS…KKNKGTKAAE (118 aa). A coiled-coil region spans residues 58–114; the sequence is AEILQEAQRRRQQEEELKQNRKLERQKEVAKRRKLDEKKKKNSEKREKRDNKKNKGT. Positions 64 to 107 are enriched in basic and acidic residues; it reads AQRRRQQEEELKQNRKLERQKEVAKRRKLDEKKKKNSEKREKRD. Positions 125–305 constitute a CP-type G domain; it reads CRHVNKVLEQ…MLDSPALVVS (181 aa). GTP-binding positions include 172–175, 256–263, and 298–301; these read NKAD, ANVGKSSV, and DSPA. The tract at residues 459 to 548 is disordered; sequence RQLVEPEPIE…DAYDFNTDFV (90 aa). Positions 465 to 497 are enriched in acidic residues; that stretch reads EPIEEELEANDGEEDVEEEHEGSEEEEDEEVEQ. Residues 501 to 523 show a composition bias toward basic and acidic residues; that stretch reads SAKEQEVVSAKEQEVVSAKEQDS. Residues 524–534 show a composition bias toward polar residues; the sequence is KSAGPSVSFDQ.

It belongs to the TRAFAC class YlqF/YawG GTPase family.

The protein localises to the nucleus. It localises to the nucleolus. Functionally, may play a role in regulating cellular proliferation. The chain is Guanine nucleotide-binding protein-like 3 (gnl3) from Xenopus tropicalis (Western clawed frog).